Reading from the N-terminus, the 385-residue chain is Non-structural maintenance of chromosomes element 4 homolog A (385 aa).

The segment at 1 to 69 (MSGDSSGRGP…PSDSGDEMMD (69 aa)) is disordered. 2 stretches are compositionally biased toward basic and acidic residues: residues 10–21 (PEGRGRGRDPHR) and 42–55 (SARE…RPSL). Over residues 56–68 (EDTEPSDSGDEMM) the composition is skewed to acidic residues. A Phosphothreonine modification is found at threonine 345. Serine 377 is subject to Phosphoserine.

This sequence belongs to the NSE4 family. As to quaternary structure, component of the SMC5-SMC6 complex which consists at least of SMC5, SMC6, NSMCE2, NSMCE1, NSMCE4A or EID3 and NSMCE3. NSMCE1, NSMCE4A or EID3 and NSMCE3 probably form a subcomplex that bridges the head domains of the SMC5:SMC6 heterodimer. Interacts with NSMCE3.

Its subcellular location is the nucleus. The protein localises to the chromosome. It localises to the telomere. Functionally, component of the SMC5-SMC6 complex, a complex involved in DNA double-strand breaks by homologous recombination. The complex may promote sister chromatid homologous recombination by recruiting the SMC1-SMC3 cohesin complex to double-strand breaks. The complex is required for telomere maintenance via recombination in ALT (alternative lengthening of telomeres) cell lines and mediates sumoylation of shelterin complex (telosome) components which is proposed to lead to shelterin complex disassembly in ALT-associated PML bodies (APBs). Is involved in positive regulation of response to DNA damage stimulus. This Homo sapiens (Human) protein is Non-structural maintenance of chromosomes element 4 homolog A (NSMCE4A).